Reading from the N-terminus, the 363-residue chain is Aminomethyltransferase (363 aa).

It belongs to the GcvT family. As to quaternary structure, the glycine cleavage system is composed of four proteins: P, T, L and H.

It catalyses the reaction N(6)-[(R)-S(8)-aminomethyldihydrolipoyl]-L-lysyl-[protein] + (6S)-5,6,7,8-tetrahydrofolate = N(6)-[(R)-dihydrolipoyl]-L-lysyl-[protein] + (6R)-5,10-methylene-5,6,7,8-tetrahydrofolate + NH4(+). Its function is as follows. The glycine cleavage system catalyzes the degradation of glycine. The protein is Aminomethyltransferase of Dechloromonas aromatica (strain RCB).